A 69-amino-acid polypeptide reads, in one-letter code: MRAIISLLLISAMVFSMIEAVPVEEGLQLFEGERGGCLPRNKFCNPSSGPRCCSGLTCKELNIWASKCL.

An N-terminal signal peptide occupies residues 1 to 20; the sequence is MRAIISLLLISAMVFSMIEA. Positions 21–34 are excised as a propeptide; the sequence is VPVEEGLQLFEGER. Intrachain disulfides connect Cys-37–Cys-53, Cys-44–Cys-58, and Cys-52–Cys-68.

It belongs to the neurotoxin 01 (U2-agtx) family. As to expression, expressed by the venom gland.

The protein resides in the secreted. Its function is as follows. Insect active toxin causing rapid but reversible paralysis in crickets. No activity shown in mammals. Does not show effect on mammalian voltage-gated calcium channels. The polypeptide is U2-agatoxin-Ao1w (Agelena orientalis (Funnel-web spider)).